The sequence spans 1335 residues: Bifunctional autolysin (1335 aa).

A signal peptide spans 1–29 (MAKKFNYKLPSMVALTLFGTAFTAHQANA). Disordered stretches follow at residues 51-88 (QAEK…QSTT), 100-262 (NEIS…KYKE), and 514-535 (WGTT…NNKL). 5 stretches are compositionally biased toward polar residues: residues 58–88 (EVTQ…QSTT), 100–127 (NEIS…VTKN), 143–155 (TDTN…QSVA), 176–223 (TASQ…NASG), and 244–258 (SLNN…TTSY). The N-acetylmuramoyl-L-alanine amidase stretch occupies residues 303–863 (VSSQKTSSLP…LSTQSTPAPK (561 aa)). The span at 515–531 (GTTSTKPSQPSKPSGGT) shows a compositional bias: low complexity. GW domains follow at residues 533–610 (NKLT…YNTA), 612–686 (APVK…TASK), 700–774 (TVTN…YNTA), 776–850 (SPVK…APSK), 868–943 (STQT…TQNI), 945–1020 (KQTQ…QNST), and 1023–1096 (QSTP…KEKI). The tract at residues 864–1335 (QVKPSTQTVN…GKYFEIPTYK (472 aa)) is endo-beta-N-acetylglucosaminidase.

This sequence in the N-terminal section; belongs to the N-acetylmuramoyl-L-alanine amidase 2 family. It in the C-terminal section; belongs to the glycosyl hydrolase 73 family. In terms of assembly, oligomer; forms a ring structure at the cell surface which is important for efficient partitioning of daughter cells after cell division. Post-translationally, undergoes proteolytic processing to generate the two extracellular lytic enzymes, probably at the septal region on the cell surface.

It localises to the secreted. It carries out the reaction Hydrolyzes the link between N-acetylmuramoyl residues and L-amino acid residues in certain cell-wall glycopeptides.. It catalyses the reaction an N(4)-(oligosaccharide-(1-&gt;3)-[oligosaccharide-(1-&gt;6)]-beta-D-Man-(1-&gt;4)-beta-D-GlcNAc-(1-&gt;4)-alpha-D-GlcNAc)-L-asparaginyl-[protein] + H2O = an oligosaccharide-(1-&gt;3)-[oligosaccharide-(1-&gt;6)]-beta-D-Man-(1-&gt;4)-D-GlcNAc + N(4)-(N-acetyl-beta-D-glucosaminyl)-L-asparaginyl-[protein]. Its function is as follows. Endohydrolysis of the di-N-acetylchitobiosyl unit in high-mannose glycopeptides and glycoproteins containing the -[(Man)5(GlcNAc)2]-Asn structure. One N-acetyl-D-glucosamine residue remains attached to the protein; the rest of the oligosaccharide is released intact. Cleaves the peptidoglycan connecting the daughter cells at the end of the cell division cycle, resulting in the separation of the two newly divided cells. Acts as an autolysin in penicillin-induced lysis. As a bacterial surface-associated protein, mediates attachment to polystyrene surfaces, contributing to biofilm formation. Also has vitronectin-binding activity. This Staphylococcus epidermidis protein is Bifunctional autolysin (atl).